The chain runs to 503 residues: Beta-mannosyltransferase 4 (503 aa).

Residues 1 to 24 (MKLDTQQISHLLSRQMYHLAPRKK) are Cytoplasmic-facing. Residues 25–45 (LLIWGGSLGFVLLLLIVASSH) traverse the membrane as a helical segment. Topologically, residues 46-503 (QRIRSTILHR…QYCQRYGELH (458 aa)) are extracellular. N468 is a glycosylation site (N-linked (GlcNAc...) asparagine).

The protein belongs to the BMT family.

It localises to the membrane. Functionally, beta-mannosyltransferase involved in cell wall biosynthesis. Responsible for addition of a hexose to the beta-mannose chain. This chain is Beta-mannosyltransferase 4 (BMT4), found in Komagataella phaffii (strain ATCC 76273 / CBS 7435 / CECT 11047 / NRRL Y-11430 / Wegner 21-1) (Yeast).